We begin with the raw amino-acid sequence, 507 residues long: Efflux pump ustT (507 aa).

Transmembrane regions (helical) follow at residues 59-79, 146-166, 180-200, 216-236, 240-260, 316-336, 359-379, 398-418, 421-441, 449-469, and 481-501; these read IAVVASLTFLITDIAGQIIVA, LLIAMVGCLLSDIWVGVVTWF, IWQLIGGGGASISSMAFAMIA, HAAVLVAELVSVPAGAALANF, IPVFGAAIFMVLGILFAYVVV, VLLIMASFFVCQLGRMISGIT, AGVNLFVLAAIIPALSYILVK, VCLIIGSFVMFLAASPGTLVF, TVFALGFAFSVTARSFLTGMV, VFTGVTTMLYGGLVIGSPMLA, and IWVGLPFLLAAVLFTLALGAI.

It belongs to the major facilitator superfamily.

It localises to the cell membrane. The protein operates within mycotoxin biosynthesis. Its function is as follows. Efflux pump; part of the gene cluster that mediates the biosynthesis of the secondary metabolite ustiloxin B, an antimitotic tetrapeptide. Probably involved in self-resistance through the export of ustiloxin B. This chain is Efflux pump ustT, found in Aspergillus flavus (strain ATCC 200026 / FGSC A1120 / IAM 13836 / NRRL 3357 / JCM 12722 / SRRC 167).